We begin with the raw amino-acid sequence, 457 residues long: MDHLPIFCQLRDRDCLIVGGGDVAERKARLLLDAGARLTVNALAFIPQFTAWADAGMLTLVEGPFDESLLDTCWLAIAATDDDALNQRVSEAAEARHIFCNVVDAPKAASFIMPSIIDRSPLMVAVSSGGTSPVLARLLREKLESLLPLHLGQVAKYAGQLRGRVKQQFATMGERRRFWEKLFVNDRLAQSLANNDQKAITETTEQLINEPLDHRGEVVLVGAGPGDAGLLTLKGLQQIQQADVVVYDRLVSDDIMNLVRRDADRVFVGKRAGYHCVPQEEINQILLREAQKGKRVVRLKGGDPFIFGRGGEELETLCNAGIPFSVVPGITAASGCSAYSGIPLTHRDYAQSVRLITGHLKTGGELDWENLAAEKQTLVFYMGLNQAATIQQKLIEHGMPGEMPVAIVENGTAVTQRVIDGTLTQLGELAQQMNSPSLIIIGRVVGLRDKLNWFSNH.

Positions methionine 1 to threonine 204 are precorrin-2 dehydrogenase /sirohydrochlorin ferrochelatase. NAD(+) contacts are provided by residues aspartate 22–valine 23 and leucine 43–alanine 44. Serine 128 is modified (phosphoserine). Residues glycine 216–histidine 457 form a uroporphyrinogen-III C-methyltransferase region. Residue proline 225 coordinates S-adenosyl-L-methionine. The active-site Proton acceptor is the aspartate 248. Lysine 270 serves as the catalytic Proton donor. Residues glycine 301–aspartate 303, isoleucine 306, threonine 331–alanine 332, methionine 382, and glycine 411 each bind S-adenosyl-L-methionine.

It in the N-terminal section; belongs to the precorrin-2 dehydrogenase / sirohydrochlorin ferrochelatase family. The protein in the C-terminal section; belongs to the precorrin methyltransferase family.

The enzyme catalyses uroporphyrinogen III + 2 S-adenosyl-L-methionine = precorrin-2 + 2 S-adenosyl-L-homocysteine + H(+). The catalysed reaction is precorrin-2 + NAD(+) = sirohydrochlorin + NADH + 2 H(+). It carries out the reaction siroheme + 2 H(+) = sirohydrochlorin + Fe(2+). Its pathway is cofactor biosynthesis; adenosylcobalamin biosynthesis; precorrin-2 from uroporphyrinogen III: step 1/1. The protein operates within cofactor biosynthesis; adenosylcobalamin biosynthesis; sirohydrochlorin from precorrin-2: step 1/1. It participates in porphyrin-containing compound metabolism; siroheme biosynthesis; precorrin-2 from uroporphyrinogen III: step 1/1. It functions in the pathway porphyrin-containing compound metabolism; siroheme biosynthesis; siroheme from sirohydrochlorin: step 1/1. Its pathway is porphyrin-containing compound metabolism; siroheme biosynthesis; sirohydrochlorin from precorrin-2: step 1/1. Its function is as follows. Multifunctional enzyme that catalyzes the SAM-dependent methylations of uroporphyrinogen III at position C-2 and C-7 to form precorrin-2 via precorrin-1. Then it catalyzes the NAD-dependent ring dehydrogenation of precorrin-2 to yield sirohydrochlorin. Finally, it catalyzes the ferrochelation of sirohydrochlorin to yield siroheme. The polypeptide is Siroheme synthase (Escherichia coli O157:H7 (strain EC4115 / EHEC)).